A 173-amino-acid polypeptide reads, in one-letter code: Crossover junction endodeoxyribonuclease RuvC (173 aa).

Residues Asp-8, Glu-67, and Asp-139 contribute to the active site. The Mg(2+) site is built by Asp-8, Glu-67, and Asp-139.

The protein belongs to the RuvC family. As to quaternary structure, homodimer which binds Holliday junction (HJ) DNA. The HJ becomes 2-fold symmetrical on binding to RuvC with unstacked arms; it has a different conformation from HJ DNA in complex with RuvA. In the full resolvosome a probable DNA-RuvA(4)-RuvB(12)-RuvC(2) complex forms which resolves the HJ. It depends on Mg(2+) as a cofactor.

Its subcellular location is the cytoplasm. It carries out the reaction Endonucleolytic cleavage at a junction such as a reciprocal single-stranded crossover between two homologous DNA duplexes (Holliday junction).. Its function is as follows. The RuvA-RuvB-RuvC complex processes Holliday junction (HJ) DNA during genetic recombination and DNA repair. Endonuclease that resolves HJ intermediates. Cleaves cruciform DNA by making single-stranded nicks across the HJ at symmetrical positions within the homologous arms, yielding a 5'-phosphate and a 3'-hydroxyl group; requires a central core of homology in the junction. The consensus cleavage sequence is 5'-(A/T)TT(C/G)-3'. Cleavage occurs on the 3'-side of the TT dinucleotide at the point of strand exchange. HJ branch migration catalyzed by RuvA-RuvB allows RuvC to scan DNA until it finds its consensus sequence, where it cleaves and resolves the cruciform DNA. This chain is Crossover junction endodeoxyribonuclease RuvC, found in Yersinia pseudotuberculosis serotype O:1b (strain IP 31758).